Consider the following 556-residue polypeptide: Glypican-4 (556 aa).

A signal peptide spans 1–18 (MARFGLPALLCTLAVLSA). Position 357 is a phosphoserine (Ser357). Ser494, Ser498, and Ser500 each carry an O-linked (Xyl...) (glycosaminoglycan) serine glycan. A glycan (N-linked (GlcNAc...) asparagine) is linked at Asn514. Residue Ser529 is the site of GPI-anchor amidated serine attachment. The propeptide at 530-556 (AGVRPGAQAYLLTVFCILFLVMQREWR) is removed in mature form.

Belongs to the glypican family.

Its subcellular location is the cell membrane. The protein resides in the secreted. The protein localises to the extracellular space. In terms of biological role, cell surface proteoglycan that bears heparan sulfate. May be involved in the development of kidney tubules and of the central nervous system. The chain is Glypican-4 (GPC4) from Homo sapiens (Human).